Here is an 878-residue protein sequence, read N- to C-terminus: Leucine--tRNA ligase (878 aa).

A compositionally biased stretch (low complexity) spans 1-14; the sequence is MTASKSSSATASAS. The tract at residues 1–23 is disordered; sequence MTASKSSSATASASDRPDRYDPI. The short motif at 58-68 is the 'HIGH' region element; the sequence is PYPSGSLHMGH. The 'KMSKS' region signature appears at 632–636; the sequence is KMSKS. Residue Lys-635 coordinates ATP.

The protein belongs to the class-I aminoacyl-tRNA synthetase family.

It localises to the cytoplasm. It catalyses the reaction tRNA(Leu) + L-leucine + ATP = L-leucyl-tRNA(Leu) + AMP + diphosphate. In Synechococcus sp. (strain WH7803), this protein is Leucine--tRNA ligase.